A 449-amino-acid polypeptide reads, in one-letter code: Type 3 secretion system ATPase (449 aa).

Position 178–183 (178–183 (GCGKTT)) interacts with ATP.

Belongs to the ATPase alpha/beta chains family. T3SS ATPase subfamily. The core secretion machinery of the T3SS is composed of approximately 20 different proteins, including cytoplasmic components, a base, an export apparatus and a needle. This subunit is part of the cytosolic complex. Forms homododecamers.

Its subcellular location is the cytoplasm. The enzyme catalyses ATP + H2O + cellular proteinSide 1 = ADP + phosphate + cellular proteinSide 2.. ATPase component of the type III secretion system (T3SS), also called injectisome, which is used to inject bacterial effector proteins into eukaryotic host cells. Acts as a molecular motor to provide the energy that is required for the export of proteins. Required for type III secretion apparatus (T3SA) formation, proper protein secretion, host cell invasion and virulence. May play a critical role in T3SS substrate recognition, disassembly of the effector/chaperone complex and unfolding of the effector in an ATP-dependent manner prior to secretion. The protein is Type 3 secretion system ATPase of Pseudomonas syringae pv. tomato (strain ATCC BAA-871 / DC3000).